The sequence spans 147 residues: Fluoride-specific ion channel FluC 1 (147 aa).

A run of 4 helical transmembrane segments spans residues 29-49, 61-81, 90-110, and 118-138; these read YVYI…ISFL, IANL…IAFF, AITT…LELI, and FITL…LCYV. Na(+) is bound by residues glycine 97 and threonine 100.

Belongs to the fluoride channel Fluc/FEX (TC 1.A.43) family.

It localises to the cell membrane. The catalysed reaction is fluoride(in) = fluoride(out). Its activity is regulated as follows. Na(+) is not transported, but it plays an essential structural role and its presence is essential for fluoride channel function. Functionally, fluoride-specific ion channel. Important for reducing fluoride concentration in the cell, thus reducing its toxicity. The chain is Fluoride-specific ion channel FluC 1 from Staphylococcus aureus (strain MRSA252).